The primary structure comprises 373 residues: Dual-specificity RNA methyltransferase RlmN (373 aa).

E94 acts as the Proton acceptor in catalysis. The Radical SAM core domain maps to 100–339 (EDDRATLCVS…VIVRKTRGDD (240 aa)). An intrachain disulfide couples C107 to C344. The [4Fe-4S] cluster site is built by C114, C118, and C121. S-adenosyl-L-methionine contacts are provided by residues 168–169 (GE), S200, 222–224 (SIH), and N301. C344 serves as the catalytic S-methylcysteine intermediate.

The protein belongs to the radical SAM superfamily. RlmN family. [4Fe-4S] cluster is required as a cofactor.

The protein resides in the cytoplasm. The enzyme catalyses adenosine(2503) in 23S rRNA + 2 reduced [2Fe-2S]-[ferredoxin] + 2 S-adenosyl-L-methionine = 2-methyladenosine(2503) in 23S rRNA + 5'-deoxyadenosine + L-methionine + 2 oxidized [2Fe-2S]-[ferredoxin] + S-adenosyl-L-homocysteine. The catalysed reaction is adenosine(37) in tRNA + 2 reduced [2Fe-2S]-[ferredoxin] + 2 S-adenosyl-L-methionine = 2-methyladenosine(37) in tRNA + 5'-deoxyadenosine + L-methionine + 2 oxidized [2Fe-2S]-[ferredoxin] + S-adenosyl-L-homocysteine. Functionally, specifically methylates position 2 of adenine 2503 in 23S rRNA and position 2 of adenine 37 in tRNAs. m2A2503 modification seems to play a crucial role in the proofreading step occurring at the peptidyl transferase center and thus would serve to optimize ribosomal fidelity. This Shewanella amazonensis (strain ATCC BAA-1098 / SB2B) protein is Dual-specificity RNA methyltransferase RlmN.